We begin with the raw amino-acid sequence, 189 residues long: dCTP deaminase (189 aa).

Residues 112–117 (KSTYAR), 136–138 (TLE), Gln-157, Tyr-171, and Gln-181 contribute to the dCTP site. Glu-138 (proton donor/acceptor) is an active-site residue.

It belongs to the dCTP deaminase family. As to quaternary structure, homotrimer.

The catalysed reaction is dCTP + H2O + H(+) = dUTP + NH4(+). It functions in the pathway pyrimidine metabolism; dUMP biosynthesis; dUMP from dCTP (dUTP route): step 1/2. Catalyzes the deamination of dCTP to dUTP. The protein is dCTP deaminase of Xanthomonas campestris pv. campestris (strain 8004).